The primary structure comprises 297 residues: Phosphatidylinositol N-acetylglucosaminyltransferase subunit C (297 aa).

4 helical membrane-spanning segments follow: residues 67 to 87 (VFVVIWWYMDEGLLAPQWLFG), 88 to 108 (TGLASSLVGYVLFDLIDGGDG), 153 to 173 (AVFMLLGHLIFFDYGANAAIV), and 239 to 259 (AFGGLLSISAVGAILFALLLF).

The protein belongs to the PIGC family. In terms of assembly, component of the glycosylphosphatidylinositol-N-acetylglucosaminyltransferase (GPI-GnT) complex composed at least by PIGA, PIGC, PIGH, PIGP, PIGQ, PIGY and DPM2. Interacts with PIGQ. Interacts with the heterodimer PIGA:PIGH.

Its subcellular location is the endoplasmic reticulum membrane. It participates in glycolipid biosynthesis; glycosylphosphatidylinositol-anchor biosynthesis. In terms of biological role, part of the glycosylphosphatidylinositol-N-acetylglucosaminyltransferase (GPI-GnT) complex that catalyzes the transfer of N-acetylglucosamine from UDP-N-acetylglucosamine to phosphatidylinositol and participates in the first step of GPI biosynthesis. This chain is Phosphatidylinositol N-acetylglucosaminyltransferase subunit C, found in Mus musculus (Mouse).